Here is a 476-residue protein sequence, read N- to C-terminus: Aspartyl/glutamyl-tRNA(Asn/Gln) amidotransferase subunit B (476 aa).

The protein belongs to the GatB/GatE family. GatB subfamily. In terms of assembly, heterotrimer of A, B and C subunits.

The catalysed reaction is L-glutamyl-tRNA(Gln) + L-glutamine + ATP + H2O = L-glutaminyl-tRNA(Gln) + L-glutamate + ADP + phosphate + H(+). The enzyme catalyses L-aspartyl-tRNA(Asn) + L-glutamine + ATP + H2O = L-asparaginyl-tRNA(Asn) + L-glutamate + ADP + phosphate + 2 H(+). Allows the formation of correctly charged Asn-tRNA(Asn) or Gln-tRNA(Gln) through the transamidation of misacylated Asp-tRNA(Asn) or Glu-tRNA(Gln) in organisms which lack either or both of asparaginyl-tRNA or glutaminyl-tRNA synthetases. The reaction takes place in the presence of glutamine and ATP through an activated phospho-Asp-tRNA(Asn) or phospho-Glu-tRNA(Gln). The chain is Aspartyl/glutamyl-tRNA(Asn/Gln) amidotransferase subunit B from Neisseria gonorrhoeae (strain ATCC 700825 / FA 1090).